A 226-amino-acid chain; its full sequence is MEYKKLHSWKLIPEKAIELQKLLSKKLTFKPLSKEINLVAGVDLSFVKDYGLAVIVILDKNMELIKVYHHIEKITFPYIPGLLAFREGPIFLKAWKKVNHNVDVVFFDGHGISHPRSMGIASHMGLWIEQPTIGIAKKILFGNYVEPENKKFSFTYITYKNQKIGIVLRSRENVKPIFISPGNLITLDESLELTKQFITKYKLPEPTRLAHKYSQLLKKQFNEELQ.

Mg(2+) contacts are provided by D43 and D108.

Belongs to the endonuclease V family. Mg(2+) serves as cofactor.

It localises to the cytoplasm. It carries out the reaction Endonucleolytic cleavage at apurinic or apyrimidinic sites to products with a 5'-phosphate.. DNA repair enzyme involved in the repair of deaminated bases. Selectively cleaves double-stranded DNA at the second phosphodiester bond 3' to a deoxyinosine leaving behind the intact lesion on the nicked DNA. The chain is Endonuclease V from Thermosipho melanesiensis (strain DSM 12029 / CIP 104789 / BI429).